The sequence spans 447 residues: Cysteine--tRNA ligase (447 aa).

Residue cysteine 28 participates in Zn(2+) binding. Positions 30–40 match the 'HIGH' region motif; that stretch reads PTVYNYIHIGN. Residues cysteine 211, histidine 236, and glutamate 240 each contribute to the Zn(2+) site. The 'KMSKS' region motif lies at 268-272; sequence KMSKS. Lysine 271 contacts ATP.

The protein belongs to the class-I aminoacyl-tRNA synthetase family. In terms of assembly, monomer. It depends on Zn(2+) as a cofactor.

The protein resides in the cytoplasm. The catalysed reaction is tRNA(Cys) + L-cysteine + ATP = L-cysteinyl-tRNA(Cys) + AMP + diphosphate. This is Cysteine--tRNA ligase from Streptococcus pyogenes serotype M3 (strain ATCC BAA-595 / MGAS315).